The sequence spans 154 residues: SsrA-binding protein (154 aa).

The span at 123–142 (AEHDKRHTIKDRDWQREQGR) shows a compositional bias: basic and acidic residues. A disordered region spans residues 123–154 (AEHDKRHTIKDRDWQREQGRLMRHKVSAPHKD). Residues 143–154 (LMRHKVSAPHKD) show a composition bias toward basic residues.

This sequence belongs to the SmpB family.

The protein resides in the cytoplasm. Required for rescue of stalled ribosomes mediated by trans-translation. Binds to transfer-messenger RNA (tmRNA), required for stable association of tmRNA with ribosomes. tmRNA and SmpB together mimic tRNA shape, replacing the anticodon stem-loop with SmpB. tmRNA is encoded by the ssrA gene; the 2 termini fold to resemble tRNA(Ala) and it encodes a 'tag peptide', a short internal open reading frame. During trans-translation Ala-aminoacylated tmRNA acts like a tRNA, entering the A-site of stalled ribosomes, displacing the stalled mRNA. The ribosome then switches to translate the ORF on the tmRNA; the nascent peptide is terminated with the 'tag peptide' encoded by the tmRNA and targeted for degradation. The ribosome is freed to recommence translation, which seems to be the essential function of trans-translation. This chain is SsrA-binding protein, found in Leptothrix cholodnii (strain ATCC 51168 / LMG 8142 / SP-6) (Leptothrix discophora (strain SP-6)).